The following is a 427-amino-acid chain: Serine--tRNA ligase (427 aa).

231–233 (TAE) serves as a coordination point for L-serine. Residue 262-264 (RSE) participates in ATP binding. Glu-285 is an L-serine binding site. Residue 349 to 352 (EISS) coordinates ATP. Ser-385 provides a ligand contact to L-serine.

This sequence belongs to the class-II aminoacyl-tRNA synthetase family. Type-1 seryl-tRNA synthetase subfamily. Homodimer. The tRNA molecule binds across the dimer.

It is found in the cytoplasm. It catalyses the reaction tRNA(Ser) + L-serine + ATP = L-seryl-tRNA(Ser) + AMP + diphosphate + H(+). The enzyme catalyses tRNA(Sec) + L-serine + ATP = L-seryl-tRNA(Sec) + AMP + diphosphate + H(+). Its pathway is aminoacyl-tRNA biosynthesis; selenocysteinyl-tRNA(Sec) biosynthesis; L-seryl-tRNA(Sec) from L-serine and tRNA(Sec): step 1/1. In terms of biological role, catalyzes the attachment of serine to tRNA(Ser). Is also able to aminoacylate tRNA(Sec) with serine, to form the misacylated tRNA L-seryl-tRNA(Sec), which will be further converted into selenocysteinyl-tRNA(Sec). The sequence is that of Serine--tRNA ligase from Rhizobium johnstonii (strain DSM 114642 / LMG 32736 / 3841) (Rhizobium leguminosarum bv. viciae).